Consider the following 199-residue polypeptide: 3-isopropylmalate dehydratase small subunit (199 aa).

This sequence belongs to the LeuD family. LeuD type 1 subfamily. Heterodimer of LeuC and LeuD.

It catalyses the reaction (2R,3S)-3-isopropylmalate = (2S)-2-isopropylmalate. The protein operates within amino-acid biosynthesis; L-leucine biosynthesis; L-leucine from 3-methyl-2-oxobutanoate: step 2/4. Catalyzes the isomerization between 2-isopropylmalate and 3-isopropylmalate, via the formation of 2-isopropylmaleate. This chain is 3-isopropylmalate dehydratase small subunit, found in Bacillus licheniformis (strain ATCC 14580 / DSM 13 / JCM 2505 / CCUG 7422 / NBRC 12200 / NCIMB 9375 / NCTC 10341 / NRRL NRS-1264 / Gibson 46).